We begin with the raw amino-acid sequence, 284 residues long: Proton-translocating ferredoxin:NAD(+) oxidoreductase complex subunit B (284 aa).

A hydrophobic region spans residues 1-26 (MNTVIMILVVMTIIGLIFGLVLAYVN). The 61-residue stretch at 32-92 (EVNPLVDLVE…AEQVAKLTGK (61 aa)) folds into the 4Fe-4S domain. [4Fe-4S] cluster contacts are provided by Cys49, Cys52, Cys57, Cys75, Cys138, Cys142, Cys148, Cys152, Cys172, Cys175, Cys178, Cys182, Cys217, Cys220, Cys223, Cys227, Cys246, Cys249, Cys254, and Cys258. 4Fe-4S ferredoxin-type domains lie at 133–162 (GGPK…MGSN), 163–192 (GLPI…FRPV), 206–237 (GGAV…VENN), and 239–269 (AVVD…IVSG).

Belongs to the 4Fe4S bacterial-type ferredoxin family. RnfB subfamily. As to quaternary structure, the complex is composed of six subunits: RnfA, RnfB, RnfC, RnfD, RnfE and RnfG. Requires [4Fe-4S] cluster as cofactor.

It localises to the cell membrane. Its function is as follows. Part of a membrane-bound complex that couples electron transfer with translocation of ions across the membrane. Couples electron transfer from reduced ferredoxin to NAD(+) with translocation of H(+) out of the cell. Essential for energy conservation during autotrophic growth. Contributes to ATP synthesis during heterotrophic growth. This chain is Proton-translocating ferredoxin:NAD(+) oxidoreductase complex subunit B, found in Clostridium ljungdahlii (strain ATCC 55383 / DSM 13528 / PETC).